The chain runs to 204 residues: N-(5'-phosphoribosyl)anthranilate isomerase (204 aa).

Belongs to the TrpF family.

The catalysed reaction is N-(5-phospho-beta-D-ribosyl)anthranilate = 1-(2-carboxyphenylamino)-1-deoxy-D-ribulose 5-phosphate. Its pathway is amino-acid biosynthesis; L-tryptophan biosynthesis; L-tryptophan from chorismate: step 3/5. The chain is N-(5'-phosphoribosyl)anthranilate isomerase from Geobacter sp. (strain M21).